The chain runs to 447 residues: Putative MSV199 domain-containing protein 420R (447 aa).

Positions 188–221 (IQTRSMLKKVEEEKIKIENEKEKALRKMLRLKEI) form a coiled coil.

This Acheta domesticus (House cricket) protein is Putative MSV199 domain-containing protein 420R.